A 291-amino-acid polypeptide reads, in one-letter code: uncharacterized protein (291 aa).

The HTH lysR-type domain maps to 1–58 (MDLKWLQTFIAAAESESFREAAEHLYLTQPAVSQHMRKLEDELDMRLFLHSGRRVVLT). Positions 18-37 (FREAAEHLYLTQPAVSQHMR) form a DNA-binding region, H-T-H motif.

This sequence belongs to the LysR transcriptional regulatory family.

This is an uncharacterized protein from Bacillus subtilis (strain 168).